A 128-amino-acid chain; its full sequence is Transcription antitermination protein NusB (128 aa).

This sequence belongs to the NusB family.

Involved in transcription antitermination. Required for transcription of ribosomal RNA (rRNA) genes. Binds specifically to the boxA antiterminator sequence of the ribosomal RNA (rrn) operons. The polypeptide is Transcription antitermination protein NusB (Exiguobacterium sp. (strain ATCC BAA-1283 / AT1b)).